The sequence spans 391 residues: NADH-quinone oxidoreductase subunit D (391 aa).

The protein belongs to the complex I 49 kDa subunit family. In terms of assembly, NDH-1 is composed of 14 different subunits. Subunits NuoB, C, D, E, F, and G constitute the peripheral sector of the complex.

It localises to the cell inner membrane. It catalyses the reaction a quinone + NADH + 5 H(+)(in) = a quinol + NAD(+) + 4 H(+)(out). NDH-1 shuttles electrons from NADH, via FMN and iron-sulfur (Fe-S) centers, to quinones in the respiratory chain. The immediate electron acceptor for the enzyme in this species is believed to be ubiquinone. Couples the redox reaction to proton translocation (for every two electrons transferred, four hydrogen ions are translocated across the cytoplasmic membrane), and thus conserves the redox energy in a proton gradient. The sequence is that of NADH-quinone oxidoreductase subunit D from Rickettsia rickettsii (strain Iowa).